The primary structure comprises 436 residues: 3-ketoacyl-CoA thiolase (436 aa).

Cys-99 functions as the Acyl-thioester intermediate in the catalytic mechanism. Active-site proton acceptor residues include His-392 and Cys-422.

The protein belongs to the thiolase-like superfamily. Thiolase family. As to quaternary structure, heterotetramer of two alpha chains (FadJ) and two beta chains (FadI).

The protein localises to the cytoplasm. It catalyses the reaction an acyl-CoA + acetyl-CoA = a 3-oxoacyl-CoA + CoA. The protein operates within lipid metabolism; fatty acid beta-oxidation. Functionally, catalyzes the final step of fatty acid oxidation in which acetyl-CoA is released and the CoA ester of a fatty acid two carbons shorter is formed. This is 3-ketoacyl-CoA thiolase from Shewanella frigidimarina (strain NCIMB 400).